The sequence spans 112 residues: 2Fe-2S ferredoxin (112 aa).

The 2Fe-2S ferredoxin-type domain maps to 5 to 107; sequence IKVTFIVNDG…GIKVRLPSAT (103 aa). [2Fe-2S] cluster-binding residues include cysteine 42, cysteine 48, cysteine 51, and cysteine 88.

It belongs to the adrenodoxin/putidaredoxin family. [2Fe-2S] cluster serves as cofactor.

Functionally, ferredoxin are iron-sulfur proteins that transfer electrons in a wide variety of metabolic reactions. The polypeptide is 2Fe-2S ferredoxin (fdxB) (Rickettsia felis (strain ATCC VR-1525 / URRWXCal2) (Rickettsia azadi)).